The following is a 55-amino-acid chain: ATP synthase F(0) complex subunit 8 (55 aa).

The helical transmembrane segment at 7–24 (SPWFFIMLTTWLTFSLII) threads the bilayer.

This sequence belongs to the ATPase protein 8 family. Component of the ATP synthase complex composed at least of ATP5F1A/subunit alpha, ATP5F1B/subunit beta, ATP5MC1/subunit c (homooctomer), MT-ATP6/subunit a, MT-ATP8/subunit 8, ATP5ME/subunit e, ATP5MF/subunit f, ATP5MG/subunit g, ATP5MK/subunit k, ATP5MJ/subunit j, ATP5F1C/subunit gamma, ATP5F1D/subunit delta, ATP5F1E/subunit epsilon, ATP5PF/subunit F6, ATP5PB/subunit b, ATP5PD/subunit d, ATP5PO/subunit OSCP. ATP synthase complex consists of a soluble F(1) head domain (subunits alpha(3) and beta(3)) - the catalytic core - and a membrane F(0) domain - the membrane proton channel (subunits c, a, 8, e, f, g, k and j). These two domains are linked by a central stalk (subunits gamma, delta, and epsilon) rotating inside the F1 region and a stationary peripheral stalk (subunits F6, b, d, and OSCP).

It localises to the mitochondrion membrane. Subunit 8, of the mitochondrial membrane ATP synthase complex (F(1)F(0) ATP synthase or Complex V) that produces ATP from ADP in the presence of a proton gradient across the membrane which is generated by electron transport complexes of the respiratory chain. ATP synthase complex consist of a soluble F(1) head domain - the catalytic core - and a membrane F(1) domain - the membrane proton channel. These two domains are linked by a central stalk rotating inside the F(1) region and a stationary peripheral stalk. During catalysis, ATP synthesis in the catalytic domain of F(1) is coupled via a rotary mechanism of the central stalk subunits to proton translocation. In vivo, can only synthesize ATP although its ATP hydrolase activity can be activated artificially in vitro. Part of the complex F(0) domain. This chain is ATP synthase F(0) complex subunit 8, found in Columbina passerina (Common ground-dove).